A 240-amino-acid chain; its full sequence is Phosphoribosylaminoimidazole-succinocarboxamide synthase (240 aa).

Belongs to the SAICAR synthetase family.

The catalysed reaction is 5-amino-1-(5-phospho-D-ribosyl)imidazole-4-carboxylate + L-aspartate + ATP = (2S)-2-[5-amino-1-(5-phospho-beta-D-ribosyl)imidazole-4-carboxamido]succinate + ADP + phosphate + 2 H(+). The protein operates within purine metabolism; IMP biosynthesis via de novo pathway; 5-amino-1-(5-phospho-D-ribosyl)imidazole-4-carboxamide from 5-amino-1-(5-phospho-D-ribosyl)imidazole-4-carboxylate: step 1/2. This is Phosphoribosylaminoimidazole-succinocarboxamide synthase from Anoxybacillus flavithermus (strain DSM 21510 / WK1).